The following is a 400-amino-acid chain: Probable phospho-2-dehydro-3-deoxyheptonate aldolase (400 aa).

It belongs to the class-II DAHP synthase family.

It carries out the reaction D-erythrose 4-phosphate + phosphoenolpyruvate + H2O = 7-phospho-2-dehydro-3-deoxy-D-arabino-heptonate + phosphate. It participates in antibiotic biosynthesis; phenazine biosynthesis. In Pseudomonas fluorescens, this protein is Probable phospho-2-dehydro-3-deoxyheptonate aldolase (phzC).